Consider the following 445-residue polypeptide: Peptide chain release factor 1, mitochondrial (445 aa).

The transit peptide at 1–61 (MNRHLCVWLF…LLSKNWSRRY (61 aa)) directs the protein to the mitochondrion. The GGQ domain stretch occupies residues 297-361 (PKDLRIDTFR…LRARLYQQII (65 aa)). The short motif at 311–313 (GGQ) is the GGQ element. Glutamine 313 carries the post-translational modification N5-methylglutamine.

The protein belongs to the prokaryotic/mitochondrial release factor family. Methylation of glutamine in the GGQ triplet by HEMK1 is conserved from bacteria to mammals.

The protein localises to the mitochondrion. In terms of biological role, mitochondrial peptide chain release factor that directs the termination of translation in response to the peptide chain non-canonical stop codons AGG and AGA. Non-canonical termination codons AGG and AGA are found at the end of MT-CO1/COX1 and MT-ND6/ND6 open reading frames, respectively. Recognizes non-canonical stop codons via a network of interactions between the codon, MTRF1 and the ribosomal RNA (rRNA): in contrast to other translation release factors, which identify the codon in the A-site via direct interactions of amino acid side chains with the bases, MTRF1 repositions the first 2 bases of the stop codon to use an intricate network of interactions that includes residues of the release factor, the rRNA of the small ribosomal subunit, as well as neighboring bases of the mRNA. The sequence is that of Peptide chain release factor 1, mitochondrial from Homo sapiens (Human).